Consider the following 670-residue polypeptide: UvrABC system protein B (670 aa).

Positions 26 to 183 (EGLEDGLAHQ…RRLAELQYAR (158 aa)) constitute a Helicase ATP-binding domain. 39 to 46 (GVTGSGKT) serves as a coordination point for ATP. The Beta-hairpin motif lies at 92–115 (YYDYYQPEAYVPSSDTFIEKDAAV). The Helicase C-terminal domain maps to 431 to 597 (QVDDLLSEIR…GLNKKVSDVL (167 aa)). In terms of domain architecture, UVR spans 630–665 (DQKIRELEAQMYTHAQNLEFELAAGLRDEIHQLREQ).

Belongs to the UvrB family. Forms a heterotetramer with UvrA during the search for lesions. Interacts with UvrC in an incision complex.

The protein resides in the cytoplasm. In terms of biological role, the UvrABC repair system catalyzes the recognition and processing of DNA lesions. A damage recognition complex composed of 2 UvrA and 2 UvrB subunits scans DNA for abnormalities. Upon binding of the UvrA(2)B(2) complex to a putative damaged site, the DNA wraps around one UvrB monomer. DNA wrap is dependent on ATP binding by UvrB and probably causes local melting of the DNA helix, facilitating insertion of UvrB beta-hairpin between the DNA strands. Then UvrB probes one DNA strand for the presence of a lesion. If a lesion is found the UvrA subunits dissociate and the UvrB-DNA preincision complex is formed. This complex is subsequently bound by UvrC and the second UvrB is released. If no lesion is found, the DNA wraps around the other UvrB subunit that will check the other stand for damage. The protein is UvrABC system protein B of Serratia proteamaculans (strain 568).